The sequence spans 122 residues: Small ribosomal subunit protein uS13 (122 aa).

The disordered stretch occupies residues 93–122 (RRGLPVRGQRTKTNARTRKGPKKTIAGKKK).

The protein belongs to the universal ribosomal protein uS13 family. In terms of assembly, part of the 30S ribosomal subunit. Forms a loose heterodimer with protein S19. Forms two bridges to the 50S subunit in the 70S ribosome.

Located at the top of the head of the 30S subunit, it contacts several helices of the 16S rRNA. In the 70S ribosome it contacts the 23S rRNA (bridge B1a) and protein L5 of the 50S subunit (bridge B1b), connecting the 2 subunits; these bridges are implicated in subunit movement. Contacts the tRNAs in the A and P-sites. This Corynebacterium efficiens (strain DSM 44549 / YS-314 / AJ 12310 / JCM 11189 / NBRC 100395) protein is Small ribosomal subunit protein uS13.